Here is an 860-residue protein sequence, read N- to C-terminus: MQEQYRPEEIESKVQLHWDEKRTFEVTEDESKEKYYCLSMLPYPSGRLHMGHVRNYTIGDVIARYQRMLGKNVLQPIGWDAFGLPAEGAAVKNNTAPAPWTYDNIAYMKNQLKMLGFGYDWSRELATCTPEYYRWEQKFFTELYKKDLVYKKTSAVNWCPNDQTVLANEQVIDGCCWRCDTKVERKEIPQWFIKITAYADELLNDLDKLDHWPDTVKTMQRNWIGRSEGVEITFNVNDYDNTLTVYTTRPDTFMGCTYLAVAAGHPLAQKAAENNPELAAFIDECRNTKVAEAEMATMEKKGVDTGFKAVHPLTGEEIPVWAANFVLMEYGTGAVMAVPGHDQRDYEFASKYGLNIKPVILAADGSEPDLSQQALTEKGVLFNSGEFNGLDHEAAFNAIADKLTAMGVGERKVNYRLRDWGVSRQRYWGAPIPMVTLEDGTVMPTPDDQLPVILPEDVVMDGITSPIKADPEWAKTTVNGMPALRETDTFDTFMESSWYYARYTCPEYKEGMLDSKAANYWLPVDIYIGGIEHAIMHLLYFRFFHKLMRDAGMVNSDEPAKQLLCQGMVLADAFYYVGENGERNWVSPVDAIVERDEKGRIVKAKDAAGHELVYTGMSKMSKSKNNGIDPQVMVERYGADTVRLFMMFASPADMTLEWQESGVEGANRFLKRVWKLVYEHTAKGDVAALNVDALTEDQKALRRDVHKTIAKVTDDIGRRQTFNTAIAAIMELMNKLAKAPTDGEQDRALMQEALLAVVRMLNPFTPHICFTLWQELKGEGDIDNAPWPVADEKAMVEDSTLVVVQVNGKVRAKITVPVDATEEQVRERAGQEHLVAKYLDGVTVRKVIYVPGKLLNLVVG.

The 'HIGH' region signature appears at 42-52; that stretch reads PYPSGRLHMGH. Residues 619–623 carry the 'KMSKS' region motif; the sequence is KMSKS. K622 is an ATP binding site.

The protein belongs to the class-I aminoacyl-tRNA synthetase family.

It localises to the cytoplasm. The catalysed reaction is tRNA(Leu) + L-leucine + ATP = L-leucyl-tRNA(Leu) + AMP + diphosphate. This is Leucine--tRNA ligase from Escherichia coli O17:K52:H18 (strain UMN026 / ExPEC).